Reading from the N-terminus, the 649-residue chain is Centrosomal protein of 63 kDa-A (649 aa).

2 coiled-coil regions span residues 19–185 (DSCE…YQHQ) and 222–556 (EEEL…DAAS). S560 is modified (phosphoserine; by atm and atr). A coiled-coil region spans residues 612 to 645 (FLQEEEQRSHELLQRLNAHIEELKQESQRTVEHF).

Belongs to the CEP63 family. Post-translationally, phosphorylation at Ser-560 by atm and atr promotes its delocalization from the centrosome and impairs its ability to promote centrosome dependent spindle assembly.

It is found in the cytoplasm. Its subcellular location is the cytoskeleton. The protein resides in the microtubule organizing center. The protein localises to the centrosome. It localises to the centriole. Its function is as follows. Required for normal spindle assembly. Plays a key role in mother-centriole-dependent centriole duplication. Plays a role in DNA damage response. Following DNA damage, such as double-strand breaks (DSBs), is removed from centrosomes; this leads to the inactivation of spindle assembly and delay in mitotic progression. In Xenopus laevis (African clawed frog), this protein is Centrosomal protein of 63 kDa-A (cep63-a).